The sequence spans 403 residues: Presqualene diphosphate synthase (403 aa).

Residues Asp-84, Glu-87, and Asp-88 each coordinate Mg(2+).

Belongs to the phytoene/squalene synthase family. Mg(2+) is required as a cofactor.

The catalysed reaction is 2 (2E,6E)-farnesyl diphosphate = presqualene diphosphate + diphosphate. In terms of biological role, catalyzes the biosynthesis of presqualene diphosphate (PSPP). Works in combination with SSL-2 or SSL-3 to produce respectively squalene or botryococcene. In most other species, farnesyl diphosphate (FPP) is converted into squalene in a two-step reaction by a single enzyme. This Botryococcus braunii (Green alga) protein is Presqualene diphosphate synthase (SSL-1).